Reading from the N-terminus, the 378-residue chain is MESSPPPPPPTITVQVKFGGRTIPVEVPAAATAADLKRLLQPLTNVLPRGQRLICKGKVLADAASLSSMQVVNGSKVMLMASQGLHQGDGPITKNSSVPAPSTRRASNVKEAQIQKSDTNVSKIRPERWKATGIIALSDSSLKAVPEEVWGCGSSIRVLDVSNNCIEAIPQEIAALRSLQKLILTANDIADGNISWEGLTCVQTLTVLSLSQNRLVTLPSSLGSITHLRELRIANNRLENLPVEIGLLKHLEILIANNNRITSLPSSIGGCESLNEVDLSSNLLAELPEAFGNLQHLKALSVRNNGLTSLPSAFFIKCSQLITLDLHGTEITNDVLRQVDGWEEFDERRRKKHQKQLDFRVGSSVVFDEGADDDYRRL.

Positions 10–86 (PTITVQVKFG…VMLMASQGLH (77 aa)) constitute a Ubiquitin-like domain. The segment at 85-120 (LHQGDGPITKNSSVPAPSTRRASNVKEAQIQKSDTN) is disordered. Positions 93 to 106 (TKNSSVPAPSTRRA) are enriched in polar residues. LRR repeat units lie at residues 129–152 (WKATGIIALSDSSLKAVPEEVWGC), 153–176 (GSSIRVLDVSNNCIEAIPQEIAAL), 178–201 (SLQKLILTANDIADGNISWEGLTC), 202–225 (VQTLTVLSLSQNRLVTLPSSLGSI), 226–250 (THLRELRIANNRLENLPVEIGLLKH), 252–271 (EILIANNNRITSLPSSIGGC), 272–293 (ESLNEVDLSSNLLAELPEAFGN), 294–317 (LQHLKALSVRNNGLTSLPSAFFIK), and 319–344 (SQLITLDLHGTEITNDVLRQVDGWEE).

Belongs to the SHOC2 family. In terms of tissue distribution, widely expressed except in panicles.

Leucine-rich repeat protein that likely mediates protein interactions, possibly in the context of signal transduction. The polypeptide is Plant intracellular Ras-group-related LRR protein 8 (IRL8) (Oryza sativa subsp. japonica (Rice)).